We begin with the raw amino-acid sequence, 238 residues long: ATP-dependent dethiobiotin synthetase BioD (238 aa).

An ATP-binding site is contributed by 12 to 17 (EVGKTV). Thr16 provides a ligand contact to Mg(2+). The active site involves Lys37. Thr41 provides a ligand contact to substrate. Residues Asp50, 109–112 (EGAG), 170–171 (GS), and 200–202 (PAG) each bind ATP. The Mg(2+) site is built by Asp50 and Glu109.

The protein belongs to the dethiobiotin synthetase family. In terms of assembly, homodimer. Mg(2+) is required as a cofactor.

The protein localises to the cytoplasm. The catalysed reaction is (7R,8S)-7,8-diammoniononanoate + CO2 + ATP = (4R,5S)-dethiobiotin + ADP + phosphate + 3 H(+). Its pathway is cofactor biosynthesis; biotin biosynthesis; biotin from 7,8-diaminononanoate: step 1/2. Catalyzes a mechanistically unusual reaction, the ATP-dependent insertion of CO2 between the N7 and N8 nitrogen atoms of 7,8-diaminopelargonic acid (DAPA, also called 7,8-diammoniononanoate) to form a ureido ring. The protein is ATP-dependent dethiobiotin synthetase BioD of Parafrankia sp. (strain EAN1pec).